The following is a 657-amino-acid chain: Translation factor GUF1, mitochondrial (657 aa).

Residues 1-39 (MRGCLQSVKWLTSALRPSQSLASSTRYPRRLLSTSAPRN) constitute a mitochondrion transit peptide. The region spanning 59-239 (ERFRNFCIVA…TVIEQIPAPV (181 aa)) is the tr-type G domain. Residues 109–116 (TVKAQTCS), 173–177 (LAFAE), and 227–230 (LLPT) contribute to the GTP site.

This sequence belongs to the TRAFAC class translation factor GTPase superfamily. Classic translation factor GTPase family. LepA subfamily.

Its subcellular location is the mitochondrion inner membrane. The catalysed reaction is GTP + H2O = GDP + phosphate + H(+). Promotes mitochondrial protein synthesis. May act as a fidelity factor of the translation reaction, by catalyzing a one-codon backward translocation of tRNAs on improperly translocated ribosomes. Binds to mitochondrial ribosomes in a GTP-dependent manner. The chain is Translation factor GUF1, mitochondrial from Ajellomyces capsulatus (strain NAm1 / WU24) (Darling's disease fungus).